A 406-amino-acid chain; its full sequence is Glycosyltransferase GlyE (406 aa).

Residues 3-265 (NTKRAVVFAG…SVILNEWFSK (263 aa)) are GT8 domain. Residues 11 to 16 (AGDYAY) and 106 to 107 (DS) each bind UDP. Positions 106, 108, and 227 each coordinate Mn(2+). 227 to 233 (HYISQDK) provides a ligand contact to UDP.

It in the N-terminal section; belongs to the glycosyltransferase 8 family. Mn(2+) serves as cofactor.

Its pathway is protein modification; protein glycosylation. Its function is as follows. Involved in the polymorphic O-glycosylation of the serine-rich repeat protein PsrP. Catalyzes the third step in glycosylation of PsrP in this bacteria. Transfers galactose from UDP-galactose to the terminal glucose moiety of already-glycosylated PsrP (using the short substrate PsrP-GlcNAc-Glc). Has a very marked preference for PsrP substrate that has already been modified by GlcNAc and glucose. Has hydrolytic activity against UDP-galactose but none against UDP-glucose. Also catalyzes the fourth step in glycosylation of PsrP in this bacteria. Can transfer the sugar from UDP-galactose to the terminal sugar moiety of PsrP-GlcNAc-Glc-Glc and of PsrP-GlcNAc-Glc-Gal. The chain is Glycosyltransferase GlyE from Streptococcus pneumoniae serotype 4 (strain ATCC BAA-334 / TIGR4).